Here is a 256-residue protein sequence, read N- to C-terminus: MAQSDPPKSPDPPLPTSIRNPQTPESGWDRIRELFQPNEQGHYPEEVGSIVKSAVTGALLGGIYGGLPAARHSKERYIQQSQAQIYQHRVEAVRSAHNAALRGFIRYGWRWGWRVAAFVTIFNSVSTGLTVYRDKLALSHYAAAGAVTGGLFRLNLGLVGLLSGSLIGAALGVPAGALISGLQSISGESIREKKRRERQELYENKVQEWSARLQVTDEVLEEMETSQQDPLEQQVEKIQELLQLPRNPAVSPKEGR.

A disordered region spans residues 1–27; the sequence is MAQSDPPKSPDPPLPTSIRNPQTPESG. The next 2 helical transmembrane spans lie at 111 to 131 and 159 to 179; these read WGWR…GLTV and VGLL…GALI.

Belongs to the Tim17/Tim22/Tim23 family. Associates with the intermediate 315 kDa subcomplex of incompletely assembled complex I.

It is found in the mitochondrion membrane. Chaperone protein involved in the assembly of the mitochondrial NADH:ubiquinone oxidoreductase complex (complex I). Participates in constructing the membrane arm of complex I. The sequence is that of Complex I assembly factor TIMMDC1, mitochondrial (timmdc1) from Xenopus laevis (African clawed frog).